Consider the following 402-residue polypeptide: UDP-GlcNAc:betaGal beta-1,3-N-acetylglucosaminyltransferase 9 (402 aa).

Residues 1 to 10 lie on the Cytoplasmic side of the membrane; the sequence is MRRRLRLRRD. A helical; Signal-anchor for type II membrane protein membrane pass occupies residues 11-27; it reads ALLTLLLGASLGLLLYA. The Lumenal segment spans residues 28 to 402; sequence QRDGAAPTAS…VAAGPFQWDS (375 aa). Low complexity predominate over residues 32-47; that stretch reads AAPTASAPRGRGRAAP. The disordered stretch occupies residues 32 to 83; sequence AAPTASAPRGRGRAAPRPTPGPRAFQLPDAGAAPPAYEGDTPAPPTPTGPFD.

This sequence belongs to the glycosyltransferase 31 family.

It localises to the golgi apparatus membrane. The protein is UDP-GlcNAc:betaGal beta-1,3-N-acetylglucosaminyltransferase 9 of Homo sapiens (Human).